The following is a 786-amino-acid chain: LPS-assembly protein LptD (786 aa).

The signal sequence occupies residues M1–A39. The segment at P767–E786 is disordered. Residues T770 to M779 are compositionally biased toward pro residues.

The protein belongs to the LptD family. Component of the lipopolysaccharide transport and assembly complex. Interacts with LptE and LptA.

The protein localises to the cell outer membrane. Functionally, together with LptE, is involved in the assembly of lipopolysaccharide (LPS) at the surface of the outer membrane. This Burkholderia cenocepacia (strain HI2424) protein is LPS-assembly protein LptD.